We begin with the raw amino-acid sequence, 544 residues long: Chaperonin GroEL 1 (544 aa).

ATP contacts are provided by residues 30 to 33, K51, 87 to 91, G415, 479 to 481, and D495; these read TLGP, DGTTT, and NAA.

The protein belongs to the chaperonin (HSP60) family. In terms of assembly, forms a cylinder of 14 subunits composed of two heptameric rings stacked back-to-back. Interacts with the co-chaperonin GroES.

It localises to the cytoplasm. It catalyses the reaction ATP + H2O + a folded polypeptide = ADP + phosphate + an unfolded polypeptide.. In terms of biological role, together with its co-chaperonin GroES, plays an essential role in assisting protein folding. The GroEL-GroES system forms a nano-cage that allows encapsulation of the non-native substrate proteins and provides a physical environment optimized to promote and accelerate protein folding. The chain is Chaperonin GroEL 1 from Vibrio cholerae serotype O1 (strain ATCC 39315 / El Tor Inaba N16961).